The chain runs to 505 residues: ATP synthase subunit alpha (505 aa).

170–177 provides a ligand contact to ATP; that stretch reads GDRQTGKT.

The protein belongs to the ATPase alpha/beta chains family. As to quaternary structure, F-type ATPases have 2 components, CF(1) - the catalytic core - and CF(0) - the membrane proton channel. CF(1) has five subunits: alpha(3), beta(3), gamma(1), delta(1), epsilon(1). CF(0) has four main subunits: a(1), b(1), b'(1) and c(9-12).

The protein localises to the cellular thylakoid membrane. It catalyses the reaction ATP + H2O + 4 H(+)(in) = ADP + phosphate + 5 H(+)(out). Its function is as follows. Produces ATP from ADP in the presence of a proton gradient across the membrane. The alpha chain is a regulatory subunit. The polypeptide is ATP synthase subunit alpha (Prochlorococcus marinus (strain MIT 9313)).